The primary structure comprises 193 residues: NADH-quinone oxidoreductase subunit B (193 aa).

Residues Cys72, Cys73, Cys137, and Cys167 each contribute to the [4Fe-4S] cluster site.

It belongs to the complex I 20 kDa subunit family. NDH-1 is composed of 14 different subunits. Subunits NuoB, C, D, E, F, and G constitute the peripheral sector of the complex. [4Fe-4S] cluster is required as a cofactor.

The protein resides in the cell inner membrane. The catalysed reaction is a quinone + NADH + 5 H(+)(in) = a quinol + NAD(+) + 4 H(+)(out). Functionally, NDH-1 shuttles electrons from NADH, via FMN and iron-sulfur (Fe-S) centers, to quinones in the respiratory chain. Couples the redox reaction to proton translocation (for every two electrons transferred, four hydrogen ions are translocated across the cytoplasmic membrane), and thus conserves the redox energy in a proton gradient. The protein is NADH-quinone oxidoreductase subunit B of Brucella abortus (strain S19).